A 520-amino-acid chain; its full sequence is Cholesterol side-chain cleavage enzyme, mitochondrial (520 aa).

The transit peptide at 1–39 (MLARGLPFRSALVKACPPLLNTGREGWGHHRVGTGEGAG) directs the protein to the mitochondrion. The segment at 27–47 (WGHHRVGTGEGAGISTRTPRP) is disordered. Residue Cys-461 participates in heme binding.

This sequence belongs to the cytochrome P450 family. As to quaternary structure, interacts with FDX1/adrenodoxin. Heme serves as cofactor.

Its subcellular location is the mitochondrion inner membrane. The catalysed reaction is 6 reduced [adrenodoxin] + cholesterol + 3 O2 + 6 H(+) = 4-methylpentanal + pregnenolone + 6 oxidized [adrenodoxin] + 4 H2O. It carries out the reaction 2 reduced [adrenodoxin] + cholesterol + O2 + 2 H(+) = (22R)-hydroxycholesterol + 2 oxidized [adrenodoxin] + H2O. The enzyme catalyses (22R)-hydroxycholesterol + 2 reduced [adrenodoxin] + O2 + 2 H(+) = (20R,22R)-20,22-dihydroxycholesterol + 2 oxidized [adrenodoxin] + H2O. It catalyses the reaction (20R,22R)-20,22-dihydroxycholesterol + 2 reduced [adrenodoxin] + O2 + 2 H(+) = 4-methylpentanal + pregnenolone + 2 oxidized [adrenodoxin] + 2 H2O. Its pathway is lipid metabolism; C21-steroid hormone metabolism. The protein operates within steroid metabolism; cholesterol metabolism. In terms of biological role, a cytochrome P450 monooxygenase that catalyzes the side-chain hydroxylation and cleavage of cholesterol to pregnenolone, the precursor of most steroid hormones. Catalyzes three sequential oxidation reactions of cholesterol, namely the hydroxylation at C22 followed with the hydroxylation at C20 to yield 20R,22R-hydroxycholesterol that is further cleaved between C20 and C22 to yield the C21-steroid pregnenolone and 4-methylpentanal. Mechanistically, uses molecular oxygen inserting one oxygen atom into a substrate and reducing the second into a water molecule. Two electrons are provided by NADPH via a two-protein mitochondrial transfer system comprising flavoprotein FDXR (adrenodoxin/ferredoxin reductase) and nonheme iron-sulfur protein FDX1 or FDX2 (adrenodoxin/ferredoxin). The sequence is that of Cholesterol side-chain cleavage enzyme, mitochondrial from Ovis aries (Sheep).